A 350-amino-acid chain; its full sequence is Blue-sensitive opsin (350 aa).

The Extracellular portion of the chain corresponds to 1-36 (MNGTEGPNFYVPMSNATGVVRSPFEYPQYYLAEPWA). N-linked (GlcNAc...) asparagine glycosylation is found at N2 and N15. The chain crosses the membrane as a helical span at residues 37–61 (FSILAAYMFFLIITGFPINFLTLYV). The Cytoplasmic segment spans residues 62 to 73 (TIEHKKLRTPLN). A helical transmembrane segment spans residues 74-98 (YILLNLAVADLFMVFGGFTTTMYTS). Residues 99–113 (MHGYFVFGETGCNLE) lie on the Extracellular side of the membrane. A disulfide bridge links C110 with C187. Residues 114-133 (GYFATLGGEISLWSLVVLAI) form a helical membrane-spanning segment. At 134 to 152 (ERWVVVCKPISNFRFGENH) the chain is on the cytoplasmic side. The chain crosses the membrane as a helical span at residues 153–176 (AIMGLTLTWVMANACAMPPLFGWS). The Extracellular segment spans residues 177-202 (RYIPEGLQCSCGIDYYTLKPEVNNES). A glycan (N-linked (GlcNAc...) asparagine) is linked at N200. A helical transmembrane segment spans residues 203 to 230 (FVIYMFLVHFTIPLTIISFCYGRLVCAV). Over 231-252 (KEAAAQQQESETTQRAEREVTR) the chain is Cytoplasmic. A helical membrane pass occupies residues 253-276 (MVVIMVISFLVCWIPYASVAWYIF). Over 277-284 (THQGSTFG) the chain is Extracellular. The helical transmembrane segment at 285–309 (PIFMTVPSFFAKSSSIYNPMIYICM) threads the bilayer. K296 carries the N6-(retinylidene)lysine modification. Residues 310–350 (NKQFRNCMITTLFCGKNPFEGEEEGSTTKTEASAVSSVSPA) are Cytoplasmic-facing. A disordered region spans residues 330–350 (GEEEGSTTKTEASAVSSVSPA).

The protein belongs to the G-protein coupled receptor 1 family. Opsin subfamily. Post-translationally, phosphorylated on some or all of the serine and threonine residues present in the C-terminal region. Rod shaped photoreceptor cells which mediates vision in dim light.

It localises to the membrane. Functionally, visual pigments are the light-absorbing molecules that mediate vision. They consist of an apoprotein, opsin, covalently linked to cis-retinal. In Conger conger (Conger eel), this protein is Blue-sensitive opsin.